Here is a 201-residue protein sequence, read N- to C-terminus: Probable GTP-binding protein EngB (201 aa).

Residues 22-197 form the EngB-type G domain; sequence RLPEYAFIGR…LDYIDSINQE (176 aa). GTP contacts are provided by residues 30–37, 57–61, 75–78, 142–145, and 173–178; these read GRSNVGKS, GKTQL, DLPG, TKAD, and VFITSS. 2 residues coordinate Mg(2+): S37 and T59.

The protein belongs to the TRAFAC class TrmE-Era-EngA-EngB-Septin-like GTPase superfamily. EngB GTPase family. Requires Mg(2+) as cofactor.

Its function is as follows. Necessary for normal cell division and for the maintenance of normal septation. The polypeptide is Probable GTP-binding protein EngB (Porphyromonas gingivalis (strain ATCC 33277 / DSM 20709 / CIP 103683 / JCM 12257 / NCTC 11834 / 2561)).